A 182-amino-acid polypeptide reads, in one-letter code: Adenylate kinase (182 aa).

Residue 12–17 coordinates ATP; it reads GAGKGT. Residues 32–61 are NMP; that stretch reads STGDLLRDEVSSGSVLGIKAAEIMNKGELV. AMP is bound by residues Thr33, Arg38, 59–61, 85–88, and Gln92; these read ELV and GFPR. The tract at residues 126–132 is LID; that stretch reads ERGRQDD. Arg127 lines the ATP pocket. The AMP site is built by Arg129 and Arg140. An ATP-binding site is contributed by Ala168.

This sequence belongs to the adenylate kinase family. As to quaternary structure, monomer.

The protein resides in the cytoplasm. The enzyme catalyses AMP + ATP = 2 ADP. It functions in the pathway purine metabolism; AMP biosynthesis via salvage pathway; AMP from ADP: step 1/1. Its function is as follows. Catalyzes the reversible transfer of the terminal phosphate group between ATP and AMP. Plays an important role in cellular energy homeostasis and in adenine nucleotide metabolism. The sequence is that of Adenylate kinase from Prochlorococcus marinus (strain NATL1A).